The primary structure comprises 310 residues: Formimidoylglutamase (310 aa).

Positions 120, 148, 150, 152, 233, and 235 each coordinate Mn(2+).

Belongs to the arginase family. Requires Mn(2+) as cofactor.

The catalysed reaction is N-formimidoyl-L-glutamate + H2O = formamide + L-glutamate. Its pathway is amino-acid degradation; L-histidine degradation into L-glutamate; L-glutamate from N-formimidoyl-L-glutamate (hydrolase route): step 1/1. Its function is as follows. Catalyzes the conversion of N-formimidoyl-L-glutamate to L-glutamate and formamide. The sequence is that of Formimidoylglutamase from Nocardia farcinica (strain IFM 10152).